A 241-amino-acid polypeptide reads, in one-letter code: Urease accessory protein UreF 1 (241 aa).

This sequence belongs to the UreF family. UreD, UreF and UreG form a complex that acts as a GTP-hydrolysis-dependent molecular chaperone, activating the urease apoprotein by helping to assemble the nickel containing metallocenter of UreC. The UreE protein probably delivers the nickel.

The protein resides in the cytoplasm. Its function is as follows. Required for maturation of urease via the functional incorporation of the urease nickel metallocenter. The sequence is that of Urease accessory protein UreF 1 from Brucella melitensis biotype 1 (strain ATCC 23456 / CCUG 17765 / NCTC 10094 / 16M).